Here is a 451-residue protein sequence, read N- to C-terminus: Cobalamin reductase PduS (451 aa).

4Fe-4S ferredoxin-type domains follow at residues 255-284 (TVLS…HELS) and 300-330 (PQLL…MRIN). Positions 264, 267, 270, 274, 309, 312, 315, and 320 each coordinate [4Fe-4S] cluster.

This sequence belongs to the PduS cobalamin reductase family. As to quaternary structure, monomeric when purified anaerobically, dimeric under aerobic conditions. Forms a complex with PduO. Interacts with PduT, probably via the N-terminus of PduS. It depends on [4Fe-4S] cluster as a cofactor. FMN serves as cofactor.

It localises to the bacterial microcompartment. Its pathway is polyol metabolism; 1,2-propanediol degradation. Its function is as follows. A protein that aids in conversion of cob(III)alamin to cob(II)alamin and then to cob(I)alamin in the bacterial microcompartment (BMC) dedicated to 1,2-propanediol (1,2-PD) degradation. The latter step requires PduO. No free cob(I)alamin is released, suggesting a complex is formed with PduO that finishes conversion to adenosylcobalamin. PduS and PduO allow regeneration of the adenosylcobalamin cofactor within the BMC. Another study showed reduction of cob(II)alamin to cob(I)alamin in the absence of PduO. Both reactions require NADH. Cyanocobalamin (CN-Cbl) is not a substrate for the first reaction. Cobalamin reduction probably occurs spontaneously in the presence of free reduced flavin nucleotides, this protein may be involved in electron transfer for this reduction. Functionally, the 1,2-PD-specific bacterial microcompartment (BMC) concentrates low levels of 1,2-PD catabolic enzymes, concentrates volatile reaction intermediates thus enhancing pathway flux and keeps the level of toxic, mutagenic propionaldehyde low. This Salmonella typhimurium (strain LT2 / SGSC1412 / ATCC 700720) protein is Cobalamin reductase PduS.